Reading from the N-terminus, the 94-residue chain is Small ribosomal subunit protein uS19 (94 aa).

This sequence belongs to the universal ribosomal protein uS19 family.

Functionally, protein S19 forms a complex with S13 that binds strongly to the 16S ribosomal RNA. In Buchnera aphidicola subsp. Cinara cedri (strain Cc), this protein is Small ribosomal subunit protein uS19.